The following is a 393-amino-acid chain: Enoyl-[acyl-carrier-protein] reductase [NADH] (393 aa).

Residues Gly48 to Tyr53, Phe74 to Glu75, Asp111 to Ala112, and Leu139 to Ala140 each bind NAD(+). Position 225 (Tyr225) interacts with substrate. Tyr235 (proton donor) is an active-site residue. Residues Lys244 and Leu273–Thr275 each bind NAD(+).

It belongs to the TER reductase family. Monomer.

It catalyses the reaction a 2,3-saturated acyl-[ACP] + NAD(+) = a (2E)-enoyl-[ACP] + NADH + H(+). The protein operates within lipid metabolism; fatty acid biosynthesis. Involved in the final reduction of the elongation cycle of fatty acid synthesis (FAS II). Catalyzes the reduction of a carbon-carbon double bond in an enoyl moiety that is covalently linked to an acyl carrier protein (ACP). This is Enoyl-[acyl-carrier-protein] reductase [NADH] from Pseudoalteromonas atlantica (strain T6c / ATCC BAA-1087).